The chain runs to 1053 residues: Mgp-operon protein 3 (1053 aa).

The N-terminal stretch at 1–25 is a signal peptide; the sequence is MKTMRKQIYKKAYWLLLPFLPLALA. Disordered stretches follow at residues 162 to 207 and 224 to 261; these read SLAK…GFKL and EPID…GGSS. A compositionally biased stretch (basic and acidic residues) spans 164 to 175; sequence AKEKGKTQREVH. Over residues 179-207 the composition is skewed to polar residues; it reads GQANQWTSQRNQHDLNNNPSPNASTGFKL. The helical transmembrane segment at 946-966 threads the bilayer; it reads VGSSVGILFILLVLGLGIGIP. Residues 1024 to 1053 are disordered; the sequence is AAFLKPPVQPPSKPEGEQKAVEVKSEETKS. The segment covering 1037-1053 has biased composition (basic and acidic residues); sequence PEGEQKAVEVKSEETKS.

The protein localises to the cell membrane. The chain is Mgp-operon protein 3 from Mycoplasma genitalium (strain ATCC 33530 / DSM 19775 / NCTC 10195 / G37) (Mycoplasmoides genitalium).